The primary structure comprises 140 residues: N14 matrix protein (140 aa).

The N-terminal stretch at 1–25 (MACTLRLTIAALVLLGICHLSRPVA) is a signal peptide.

It belongs to the N16 matrix protein family. In terms of assembly, heterooligomer; disulfide-linked. Pif97, Pif80, N16 and other proteins form a complex. As to expression, component of conchiolin, the organic matrix of nacre. Only expressed in the dorsal region of the mantle.

The protein resides in the secreted. It localises to the extracellular space. Its subcellular location is the extracellular matrix. Its function is as follows. May be specifically involved in the formation of the nacreous layer. The chain is N14 matrix protein from Pinctada maxima (Silver-lipped pearl oyster).